A 1162-amino-acid chain; its full sequence is Carbamoyl phosphate synthase large chain (1162 aa).

Positions 1 to 456 are carboxyphosphate synthetic domain; the sequence is MPKRTDIKSI…SLQKALRGLE (456 aa). ATP contacts are provided by arginine 129, arginine 222, glycine 228, glycine 229, glutamate 261, valine 263, glutamate 268, glycine 294, valine 295, histidine 296, glutamine 338, and glutamate 352. The 196-residue stretch at 186 to 381 folds into the ATP-grasp 1 domain; the sequence is ETEWQLGEVE…IAKVAAKLAV (196 aa). 3 residues coordinate Mg(2+): glutamine 338, glutamate 352, and asparagine 354. Glutamine 338, glutamate 352, and asparagine 354 together coordinate Mn(2+). Positions 457 to 613 are oligomerization domain; it reads TGLTGFDEIA…PFVGQPRSEA (157 aa). The carbamoyl phosphate synthetic domain stretch occupies residues 614-1025; sequence EVSDRKKVVI…AFAKAQLGAG (412 aa). An ATP-grasp 2 domain is found at 742–954; sequence QKLLIKLDLN…IAKVAARIMA (213 aa). ATP-binding residues include arginine 778, threonine 838, leucine 840, glutamate 845, glycine 870, isoleucine 871, histidine 872, serine 873, glutamine 913, and glutamate 925. Residues glutamine 913, glutamate 925, and asparagine 927 each coordinate Mg(2+). Mn(2+)-binding residues include glutamine 913, glutamate 925, and asparagine 927. The 137-residue stretch at 1026–1162 folds into the MGS-like domain; the sequence is VELPREGTVF…VRPLQDYFRS (137 aa). Residues 1026 to 1162 are allosteric domain; it reads VELPREGTVF…VRPLQDYFRS (137 aa).

It belongs to the CarB family. As to quaternary structure, composed of two chains; the small (or glutamine) chain promotes the hydrolysis of glutamine to ammonia, which is used by the large (or ammonia) chain to synthesize carbamoyl phosphate. Tetramer of heterodimers (alpha,beta)4. Requires Mg(2+) as cofactor. It depends on Mn(2+) as a cofactor.

The enzyme catalyses hydrogencarbonate + L-glutamine + 2 ATP + H2O = carbamoyl phosphate + L-glutamate + 2 ADP + phosphate + 2 H(+). It catalyses the reaction hydrogencarbonate + NH4(+) + 2 ATP = carbamoyl phosphate + 2 ADP + phosphate + 2 H(+). Its pathway is amino-acid biosynthesis; L-arginine biosynthesis; carbamoyl phosphate from bicarbonate: step 1/1. It functions in the pathway pyrimidine metabolism; UMP biosynthesis via de novo pathway; (S)-dihydroorotate from bicarbonate: step 1/3. Functionally, large subunit of the glutamine-dependent carbamoyl phosphate synthetase (CPSase). CPSase catalyzes the formation of carbamoyl phosphate from the ammonia moiety of glutamine, carbonate, and phosphate donated by ATP, constituting the first step of 2 biosynthetic pathways, one leading to arginine and/or urea and the other to pyrimidine nucleotides. The large subunit (synthetase) binds the substrates ammonia (free or transferred from glutamine from the small subunit), hydrogencarbonate and ATP and carries out an ATP-coupled ligase reaction, activating hydrogencarbonate by forming carboxy phosphate which reacts with ammonia to form carbamoyl phosphate. The protein is Carbamoyl phosphate synthase large chain of Brucella melitensis biotype 1 (strain ATCC 23456 / CCUG 17765 / NCTC 10094 / 16M).